The sequence spans 468 residues: 3-isopropylmalate dehydratase large subunit (468 aa).

Cys-349, Cys-409, and Cys-412 together coordinate [4Fe-4S] cluster.

This sequence belongs to the aconitase/IPM isomerase family. LeuC type 1 subfamily. In terms of assembly, heterodimer of LeuC and LeuD. [4Fe-4S] cluster serves as cofactor.

The catalysed reaction is (2R,3S)-3-isopropylmalate = (2S)-2-isopropylmalate. Its pathway is amino-acid biosynthesis; L-leucine biosynthesis; L-leucine from 3-methyl-2-oxobutanoate: step 2/4. In terms of biological role, catalyzes the isomerization between 2-isopropylmalate and 3-isopropylmalate, via the formation of 2-isopropylmaleate. The sequence is that of 3-isopropylmalate dehydratase large subunit from Shewanella baltica (strain OS155 / ATCC BAA-1091).